Reading from the N-terminus, the 2968-residue chain is Polyketide synthase 37 (2968 aa).

The region spanning 32 to 454 (KEPIAIIGIG…GSNSSLFLSS (423 aa)) is the Ketosynthase family 3 (KS3) domain. Active-site for beta-ketoacyl synthase activity residues include cysteine 198, histidine 338, and histidine 378. Residues 624 to 950 (FIFSGQGQQW…LSTLSKNSNS (327 aa)) are malonyl-CoA:ACP transacylase (MAT) domain. The For malonyltransferase activity role is filled by serine 718. The interval 1017–1157 (PPMFISLDRK…GIIKYGTNYL (141 aa)) is N-terminal hotdog fold. Positions 1017–1350 (PPMFISLDRK…FKGINSSSSS (334 aa)) constitute a PKS/mFAS DH domain. A dehydratase (DH) domain region spans residues 1031–1345 (TPSFEVRLNQ…LTNLEFKGIN (315 aa)). Residue histidine 1049 is the Proton acceptor; for dehydratase activity of the active site. A C-terminal hotdog fold region spans residues 1183–1350 (FKSFNSNEFY…FKGINSSSSS (168 aa)). The Proton donor; for dehydratase activity role is filled by aspartate 1257. The tract at residues 1522 to 1547 (SCGGGGGSTNNTISNSSSSISSIDNG) is disordered. Residues 1530–1547 (TNNTISNSSSSISSIDNG) show a composition bias toward low complexity. The interval 1718-2053 (GIISDLKIKQ…SGNHIGKILI (336 aa)) is enoyl reductase (ER) domain. Positions 2083–2277 (TYIFTGFGGL…LKSSCIHLAS (195 aa)) are ketoreductase (KR) domain. The interval 2379-2400 (GDGSFDDLNQLEDEGQQGFGNG) is disordered. The Carrier domain occupies 2421–2498 (FDNDFYTKSI…STVELIKNKL (78 aa)). Serine 2458 bears the O-(pantetheine 4'-phosphoryl)serine mark. The interval 2568–2589 (SSSSNNSNSKNELTSPPPSAKR) is disordered. Residues 2707–2968 (ISHVVGVTST…IEAILFKLIK (262 aa)) form a chalcone synthase region. The active site involves cysteine 2747.

Pantetheine 4'-phosphate serves as cofactor.

It catalyses the reaction (E)-4-coumaroyl-CoA + 3 malonyl-CoA + 3 H(+) = 2',4,4',6'-tetrahydroxychalcone + 3 CO2 + 4 CoA. The catalysed reaction is hexanoyl-CoA + 3 malonyl-CoA + 3 H(+) = 2,4,6-trihydroxyphenylhexan-1-one + 3 CO2 + 4 CoA. The protein operates within secondary metabolite biosynthesis; flavonoid biosynthesis. Its function is as follows. Polyketide synthase; part of the gene cluster that mediates the biosynthesis of DIF-1 (Differentiation Inducing Factor-1), a signal molecule involved in the differentiation of pstO (prestalk-O) cells. The three-step process begins with the formation of (2,4,6-trihydroxyphenyl)-1-hexan-1-one (THPH) by the polyketide synthase StlB. THPH is then dichlorinated by the flavin-dependent halogenase ChlA. The last step of DIF-1 biosynthesis is the O-methylation of dichloro-THPH (or des-methyl-DIF-1) by the methyltransferase DmtA to yield DIF-1. The polypeptide is Polyketide synthase 37 (StlB) (Dictyostelium discoideum (Social amoeba)).